A 1207-amino-acid polypeptide reads, in one-letter code: DNA-directed RNA polymerase, mitochondrial (1207 aa).

The N-terminal 41 residues, 1-41 (MSALRWTRSAAGLGRVLRSPGPHRPPSEEGTFGGFCSSRRS), are a transit peptide targeting the mitochondrion. Disordered regions lie at residues 1 to 48 (MSAL…SPRE) and 82 to 103 (KKVQVDRPPQGHSSRWAQKLEA). PPR repeat units lie at residues 232-266 (TLHMYNTVMLGWARKGSFRELVYVFLMLKDAGLSP) and 267-302 (DLCSYAAALQCMGRRDQDVRTIQRCLKQMMEEGFQP). Residues 702–724 (VPPPRSEAPRPARYQLPPGSTPV) form a disordered region. The interval 773–1207 (FRGRTYPCPP…QVIRSTYFFS (435 aa)) is mediates interaction with TEFM. Residues Asp-893, Lys-962, and Asp-1121 contribute to the active site.

This sequence belongs to the phage and mitochondrial RNA polymerase family. In terms of assembly, homodimer. Component of the mitochondrial transcription initiation complex, composed at least of TFB2M, TFAM and POLRMT. In this complex TFAM recruits POLRMT to the promoter whereas TFB2M induces structural changes in POLRMT to enable promoter opening and trapping of the DNA non-template strand. Upon metabolic stress, forms a complex composed of FOXO3, SIRT3 and mitochondrial RNA polymerase POLRMT; the complex is recruited to mtDNA in a SIRT3-dependent manner. Also forms a complex composed of FOXO3, SIRT3, TFAM and POLRMT. Interacts with TFB1M and TFB2M, leading to the stimulation of transcription. Interacts with TEFM. Interacts with MTRES1.

The protein resides in the mitochondrion. It catalyses the reaction RNA(n) + a ribonucleoside 5'-triphosphate = RNA(n+1) + diphosphate. DNA-dependent RNA polymerase catalyzes the transcription of mitochondrial DNA into RNA using the four ribonucleoside triphosphates as substrates. Component of the mitochondrial transcription initiation complex, composed at least of TFB2M, TFAM and POLRMT that is required for basal transcription of mitochondrial DNA. In this complex, TFAM recruits POLRMT to a specific promoter whereas TFB2M induces structural changes in POLRMT to enable promoter opening and trapping of the DNA non-template strand. Has DNA primase activity. Catalyzes the synthesis of short RNA primers that are necessary for the initiation of lagging-strand DNA synthesis from the origin of light-strand DNA replication (OriL). This chain is DNA-directed RNA polymerase, mitochondrial, found in Mus musculus (Mouse).